We begin with the raw amino-acid sequence, 244 residues long: Probable transcriptional regulatory protein DNO_1179 (244 aa).

Belongs to the TACO1 family.

It localises to the cytoplasm. This Dichelobacter nodosus (strain VCS1703A) protein is Probable transcriptional regulatory protein DNO_1179.